We begin with the raw amino-acid sequence, 173 residues long: Translation initiation factor IF-3 (173 aa).

Belongs to the IF-3 family. In terms of assembly, monomer.

The protein resides in the cytoplasm. IF-3 binds to the 30S ribosomal subunit and shifts the equilibrium between 70S ribosomes and their 50S and 30S subunits in favor of the free subunits, thus enhancing the availability of 30S subunits on which protein synthesis initiation begins. This Methylobacterium sp. (strain 4-46) protein is Translation initiation factor IF-3.